The sequence spans 229 residues: Nectarin-1 (229 aa).

An N-terminal signal peptide occupies residues 1–32 (MAAFGINSKIFQSMEMAILFLLAISIDRYCFA). Residues Cys42 and Cys57 are joined by a disulfide bond. Asn60 is a glycosylation site (N-linked (GlcNAc...) asparagine). Residues 69-217 (LAISKPGATN…TFQINTEDVQ (149 aa)) enclose the Cupin type-1 domain. Mn(2+)-binding residues include His117, His119, Glu124, and His163.

Monomer. In the absence of manganese, it forms tetrameric and pentameric forms which show superoxide dismutase activity. Mn(2+) serves as cofactor. Nectary tissues and to a lower level ovary. Not detected in petals, stems, leaves, roots or other floral tissues.

It is found in the secreted. The protein resides in the extracellular space. The protein localises to the apoplast. The enzyme catalyses 2 superoxide + 2 H(+) = H2O2 + O2. In terms of biological role, may interact with bacterial adhesins thereby protecting the reproductive tissues from microbial attack. Has no oxalate oxidase activity. This Nicotiana langsdorffii x Nicotiana sanderae (Ornamental tobacco) protein is Nectarin-1 (NECI).